A 434-amino-acid chain; its full sequence is Histidinol dehydrogenase (434 aa).

Residues Glu260 and His263 each contribute to the Zn(2+) site. Active-site proton acceptor residues include Glu330 and His331. His423 contacts Zn(2+).

Belongs to the histidinol dehydrogenase family. Zn(2+) is required as a cofactor.

The catalysed reaction is L-histidinol + 2 NAD(+) + H2O = L-histidine + 2 NADH + 3 H(+). It functions in the pathway amino-acid biosynthesis; L-histidine biosynthesis; L-histidine from 5-phospho-alpha-D-ribose 1-diphosphate: step 9/9. Its function is as follows. Catalyzes the sequential NAD-dependent oxidations of L-histidinol to L-histidinaldehyde and then to L-histidine. The polypeptide is Histidinol dehydrogenase (hisD) (Synechocystis sp. (strain ATCC 27184 / PCC 6803 / Kazusa)).